The sequence spans 179 residues: Large ribosomal subunit protein uL5 (179 aa).

This sequence belongs to the universal ribosomal protein uL5 family. Part of the 50S ribosomal subunit; part of the 5S rRNA/L5/L18/L25 subcomplex. Contacts the 5S rRNA and the P site tRNA. Forms a bridge to the 30S subunit in the 70S ribosome.

Its function is as follows. This is one of the proteins that bind and probably mediate the attachment of the 5S RNA into the large ribosomal subunit, where it forms part of the central protuberance. In the 70S ribosome it contacts protein S13 of the 30S subunit (bridge B1b), connecting the 2 subunits; this bridge is implicated in subunit movement. Contacts the P site tRNA; the 5S rRNA and some of its associated proteins might help stabilize positioning of ribosome-bound tRNAs. The protein is Large ribosomal subunit protein uL5 of Azotobacter vinelandii (strain DJ / ATCC BAA-1303).